We begin with the raw amino-acid sequence, 119 residues long: Ribosome-binding factor A (119 aa).

It belongs to the RbfA family. In terms of assembly, monomer. Binds 30S ribosomal subunits, but not 50S ribosomal subunits or 70S ribosomes.

It localises to the cytoplasm. In terms of biological role, one of several proteins that assist in the late maturation steps of the functional core of the 30S ribosomal subunit. Associates with free 30S ribosomal subunits (but not with 30S subunits that are part of 70S ribosomes or polysomes). Required for efficient processing of 16S rRNA. May interact with the 5'-terminal helix region of 16S rRNA. This Lactococcus lactis subsp. cremoris (strain SK11) protein is Ribosome-binding factor A.